The following is a 597-amino-acid chain: MQHIRNFSIIAHIDHGKSTLADRIIHLCGGLSDREMEEQVLDSMELERERGITIKAQTAALEYKSRDGSSYLLNLIDTPGHVDFSYEVSRSLAACEGALLVVDASQGVEAQTVANCYTAIEQGVEVIPVLNKIDLPAAEPERVIKEIEDIIGIEAQDAVRASAKTGVGVEDILEAVISRIPPPKGNPEAPLKALIIDSWFDNYVGVVMLVRVMDGVLKPKDRILLMASKTTHLCEQVGVFTPKSRNRESLSAGEVGFIISGIKELKSAKVGDTVTLVDRPAPQPLLGFKEIKPQVFAGLYPVESNQYDALRDALEKLKLNDSSLQYEPETSQALGFGFRCGFLGLLHLDIVQERLEREYDMNLITTAPTVVYQVVLRDGSVIEIENPSRLPDLSKIEQIREPIITATILVPQEYVGSVITLCISKRGIQKNMQYMGRQVMLTYEIPLNEVVMDFFDRLKSTSRGYASLDYEFKEFRASDLVKLDILINGERVDALSLIVHRASSQYRGRELAQKMRELIPRQMFDIAVQAAIGSHIIARESIKALRKNVLAKCYGGDITRKRKLLEKQKAGKKRMKQVGNVEIPQEAFLAILQVGEK.

The tr-type G domain maps to 2-184; it reads QHIRNFSIIA…AVISRIPPPK (183 aa). Residues 14 to 19 and 131 to 134 contribute to the GTP site; these read DHGKST and NKID.

It belongs to the TRAFAC class translation factor GTPase superfamily. Classic translation factor GTPase family. LepA subfamily.

The protein resides in the cell inner membrane. The catalysed reaction is GTP + H2O = GDP + phosphate + H(+). Required for accurate and efficient protein synthesis under certain stress conditions. May act as a fidelity factor of the translation reaction, by catalyzing a one-codon backward translocation of tRNAs on improperly translocated ribosomes. Back-translocation proceeds from a post-translocation (POST) complex to a pre-translocation (PRE) complex, thus giving elongation factor G a second chance to translocate the tRNAs correctly. Binds to ribosomes in a GTP-dependent manner. This is Elongation factor 4 from Nitrosospira multiformis (strain ATCC 25196 / NCIMB 11849 / C 71).